Consider the following 573-residue polypeptide: Probable cytochrome c oxidase subunit 1 (573 aa).

The chain crosses the membrane as a helical span at residues 40–60 (IGIMYCVACISFFFIGGLLAL). His-86 is a Fe(II)-heme a binding site. Transmembrane regions (helical) follow at residues 89-109 (IMLLFYATPIVFGFANLVLPL), 121-141 (LNAFSFWLFVFGATIGAAGFI), 170-190 (LWIMGLIVAGLGTILGAVNMI), 213-233 (IMVTSILILIAFPLLTAALFG), 258-278 (LFWFFGHPEVYIIALPFFGIV), and 290-310 (IFGYTTLVYATLSIAALSVAV). His-264 and Tyr-268 together coordinate Cu cation. Positions 264–268 (HPEVY) form a cross-link, 1'-histidyl-3'-tyrosine (His-Tyr). Cu cation-binding residues include His-313 and His-314. The next 2 helical transmembrane spans lie at 315–335 (MFATGAVLLPFFSFMTYLIAV) and 359–379 (MLFSVGFMVTFLLGGLTGVLL). His-397 contributes to the heme a3 binding site. Helical transmembrane passes span 398–418 (FHYVLFGTIVFATFAGIYFWF), 433–453 (LHFWLTFIGFHTTFLVQHWLG), and 476–496 (VSTIGAFILGASMFPFVWNVF). Position 399 (His-399) interacts with Fe(II)-heme a.

The protein belongs to the heme-copper respiratory oxidase family.

The protein localises to the cell membrane. It carries out the reaction 4 Fe(II)-[cytochrome c] + O2 + 8 H(+)(in) = 4 Fe(III)-[cytochrome c] + 2 H2O + 4 H(+)(out). The protein operates within energy metabolism; oxidative phosphorylation. Its function is as follows. Cytochrome c oxidase is the component of the respiratory chain that catalyzes the reduction of oxygen to water. Subunits 1-3 form the functional core of the enzyme complex. CO I is the catalytic subunit of the enzyme. Electrons originating in cytochrome c are transferred via the copper A center of subunit 2 and heme A of subunit 1 to the bimetallic center formed by heme A3 and copper B. The sequence is that of Probable cytochrome c oxidase subunit 1 (ctaD) from Mycobacterium bovis (strain ATCC BAA-935 / AF2122/97).